Reading from the N-terminus, the 132-residue chain is Small ribosomal subunit protein uS11 (132 aa).

This sequence belongs to the universal ribosomal protein uS11 family. As to quaternary structure, part of the 30S ribosomal subunit. Interacts with proteins S7 and S18. Binds to IF-3.

Located on the platform of the 30S subunit, it bridges several disparate RNA helices of the 16S rRNA. Forms part of the Shine-Dalgarno cleft in the 70S ribosome. The chain is Small ribosomal subunit protein uS11 from Bifidobacterium animalis subsp. lactis (strain AD011).